Consider the following 138-residue polypeptide: Endoribonuclease YbeY (138 aa).

Zn(2+) contacts are provided by His105, His109, and Asp115.

The protein belongs to the endoribonuclease YbeY family. The cofactor is Zn(2+).

Its subcellular location is the cytoplasm. Functionally, single strand-specific metallo-endoribonuclease involved in late-stage 70S ribosome quality control and in maturation of the 3' terminus of the 16S rRNA. This is Endoribonuclease YbeY from Chlorobium phaeobacteroides (strain BS1).